We begin with the raw amino-acid sequence, 285 residues long: Flagellar filament core protein flaB2 (285 aa).

It belongs to the bacterial flagellin family. In terms of assembly, the flagellum consists of an outer layer composed of two sheath proteins, flaA1 (44 kDa) and flaA2 (35 kDa) around a core that contains three proteins flaB1 (37 kDa), flaB2 (34 kDa) and flaB3 (32 kDa).

It is found in the periplasmic flagellum. The protein localises to the periplasm. Its function is as follows. Component of the core of the flagella. This Brachyspira hyodysenteriae (Treponema hyodysenteriae) protein is Flagellar filament core protein flaB2 (flaB2).